Consider the following 260-residue polypeptide: UPF0294 protein plu0699 (260 aa).

The protein belongs to the UPF0294 family.

The protein resides in the cytoplasm. The sequence is that of UPF0294 protein plu0699 from Photorhabdus laumondii subsp. laumondii (strain DSM 15139 / CIP 105565 / TT01) (Photorhabdus luminescens subsp. laumondii).